The chain runs to 394 residues: Ribulose bisphosphate carboxylase large chain (394 aa).

The residue at position 5 (Lys-5) is an N6,N6,N6-trimethyllysine. Substrate contacts are provided by Asn-114 and Thr-164. The Proton acceptor role is filled by Lys-166. Residue Lys-168 participates in substrate binding. Residues Lys-192, Asp-194, and Glu-195 each contribute to the Mg(2+) site. N6-carboxylysine is present on Lys-192. Residue His-285 is the Proton acceptor of the active site. Arg-286, His-318, and Ser-370 together coordinate substrate.

This sequence belongs to the RuBisCO large chain family. Type I subfamily. In terms of assembly, heterohexadecamer of 8 large chains and 8 small chains. It depends on Mg(2+) as a cofactor.

It is found in the plastid. It localises to the chloroplast. The catalysed reaction is 2 (2R)-3-phosphoglycerate + 2 H(+) = D-ribulose 1,5-bisphosphate + CO2 + H2O. The enzyme catalyses D-ribulose 1,5-bisphosphate + O2 = 2-phosphoglycolate + (2R)-3-phosphoglycerate + 2 H(+). Its function is as follows. RuBisCO catalyzes two reactions: the carboxylation of D-ribulose 1,5-bisphosphate, the primary event in carbon dioxide fixation, as well as the oxidative fragmentation of the pentose substrate in the photorespiration process. Both reactions occur simultaneously and in competition at the same active site. The chain is Ribulose bisphosphate carboxylase large chain (rbcL) from Nymphaea odorata (White water lily).